A 170-amino-acid chain; its full sequence is Ureidoglycolate lyase 1 (170 aa).

Belongs to the ureidoglycolate lyase family. In terms of assembly, homodimer. Requires Ni(2+) as cofactor.

The catalysed reaction is (S)-ureidoglycolate = urea + glyoxylate. It participates in nitrogen metabolism; (S)-allantoin degradation. Its function is as follows. Catalyzes the catabolism of the allantoin degradation intermediate (S)-ureidoglycolate, generating urea and glyoxylate. Involved in the utilization of allantoin as nitrogen source. The protein is Ureidoglycolate lyase 1 of Rhizobium meliloti (strain 1021) (Ensifer meliloti).